A 235-amino-acid polypeptide reads, in one-letter code: Sugar fermentation stimulation protein homolog (235 aa).

This sequence belongs to the SfsA family.

The sequence is that of Sugar fermentation stimulation protein homolog from Nitrosococcus oceani (strain ATCC 19707 / BCRC 17464 / JCM 30415 / NCIMB 11848 / C-107).